The sequence spans 80 residues: Antitoxin VapB15 (80 aa).

Residues 60 to 80 (DFSNDEIESFSDTDRKLADES) are disordered. Glu67 serves as a coordination point for Mg(2+). Position 67 (Glu67) interacts with Mn(2+). The span at 71–80 (DTDRKLADES) shows a compositional bias: basic and acidic residues.

In terms of assembly, forms a VapB15-VapC15(2) heterotrimer and a VapB15(2)-VapC15(2) heterotetramer; each toxin pair forms a homodimer which creates a channel in which the antitoxin binds. Mg(2+) is required as a cofactor. Mn(2+) serves as cofactor.

Its function is as follows. Antitoxin component of a type II toxin-antitoxin (TA) system. Neutralizes the toxic effect of cognate toxin VapC15. The chain is Antitoxin VapB15 (vapB15) from Mycobacterium tuberculosis (strain CDC 1551 / Oshkosh).